Here is a 497-residue protein sequence, read N- to C-terminus: Cysteine--tRNA ligase (497 aa).

Position 34 (C34) interacts with Zn(2+). Positions 36 to 46 (PTVYDFAHIGN) match the 'HIGH' region motif. Positions 243, 268, and 272 each coordinate Zn(2+). The 'KMSKS' region motif lies at 301–305 (KMAKS). K304 is an ATP binding site. A disordered region spans residues 478 to 497 (LMDYKDPETGERRTKWEVKR). Residues 480–497 (DYKDPETGERRTKWEVKR) are compositionally biased toward basic and acidic residues.

This sequence belongs to the class-I aminoacyl-tRNA synthetase family. As to quaternary structure, monomer. Zn(2+) serves as cofactor.

It localises to the cytoplasm. It catalyses the reaction tRNA(Cys) + L-cysteine + ATP = L-cysteinyl-tRNA(Cys) + AMP + diphosphate. In Chelativorans sp. (strain BNC1), this protein is Cysteine--tRNA ligase.